A 198-amino-acid chain; its full sequence is RxLR effector protein CRE4 (198 aa).

The signal sequence occupies residues methionine 1–proline 20. The short motif at arginine 43–arginine 52 is the RxLR-dEER element.

Belongs to the RxLR effector family.

It is found in the secreted. The protein localises to the host cytoplasm. Its subcellular location is the host nucleus. It localises to the host nucleolus. Functionally, effector that is involved in host plant infection. Contributes to virulence during the early infection stage, by inhibiting plant defense responses induced by both PAMP-triggered immunity (PTI) and effector-triggered immunity (ETI). The polypeptide is RxLR effector protein CRE4 (CRE4) (Phytophthora infestans (strain T30-4) (Potato late blight agent)).